Here is a 291-residue protein sequence, read N- to C-terminus: GTP-binding protein RHO4 (291 aa).

The span at 14-31 (GNESNIVSQGSPSSSNLP) shows a compositional bias: polar residues. The tract at residues 14–45 (GNESNIVSQGSPSSSNLPESPGTLDEKNLPRL) is disordered. 79–86 (GDGAVGKT) contacts GTP. An Effector region motif is present at residues 101-109 (YIPTIFENY). GTP is bound by residues 127-131 (DTAGQ) and 185-188 (LKSD). Positions 250–273 (THTIKNPFKRNTTRSDIDSSTGDT) are disordered. Phosphoserine is present on residues Ser264, Ser268, and Ser276. Residue Cys288 is modified to Cysteine methyl ester. Residue Cys288 is the site of S-farnesyl cysteine attachment. The propeptide at 289–291 (IIM) is removed in mature form.

The protein belongs to the small GTPase superfamily. Rho family. Interacts with BEM4.

The protein resides in the cell membrane. The enzyme catalyses GTP + H2O = GDP + phosphate + H(+). Plays an important role in cell growth. Required to keep the uninucleated state. May be involved in the organization of the cytoskeleton which affects microtubule functions. Most likely RHO3 and RHO4 of S.cerevisiae regulate partially overlapping but different pathways. This Saccharomyces cerevisiae (strain ATCC 204508 / S288c) (Baker's yeast) protein is GTP-binding protein RHO4 (RHO4).